A 365-amino-acid polypeptide reads, in one-letter code: 3-dehydroquinate synthase (365 aa).

Residues 106–110 (GVIGD), 130–131 (TT), lysine 142, lysine 151, and 169–172 (FFAT) contribute to the NAD(+) site. Residues glutamate 184, histidine 247, and histidine 264 each coordinate Zn(2+).

This sequence belongs to the sugar phosphate cyclases superfamily. Dehydroquinate synthase family. The cofactor is NAD(+). Co(2+) serves as cofactor. It depends on Zn(2+) as a cofactor.

It localises to the cytoplasm. The enzyme catalyses 7-phospho-2-dehydro-3-deoxy-D-arabino-heptonate = 3-dehydroquinate + phosphate. It functions in the pathway metabolic intermediate biosynthesis; chorismate biosynthesis; chorismate from D-erythrose 4-phosphate and phosphoenolpyruvate: step 2/7. Catalyzes the conversion of 3-deoxy-D-arabino-heptulosonate 7-phosphate (DAHP) to dehydroquinate (DHQ). The sequence is that of 3-dehydroquinate synthase from Listeria monocytogenes serotype 4b (strain F2365).